The following is a 172-amino-acid chain: MAEYKKNNNNDDKDYIEKLVNIRRVVKVVKGGRIFGFSALVVVGDGNGKVGYGTGKAREVPVAIQKAMDKARKRMKSVSLVNGTLHYPIVSSVGAAKVYMQPASEGTGVIAGGPMRSVLEAVGVHNILAKCNGTRNPISVVRATVEGLTSMSSPQLVAAKRGKTVDQITRKG.

The S5 DRBM domain occupies 15 to 78; the sequence is YIEKLVNIRR…DKARKRMKSV (64 aa).

Belongs to the universal ribosomal protein uS5 family. As to quaternary structure, part of the 30S ribosomal subunit. Contacts proteins S4 and S8.

Functionally, with S4 and S12 plays an important role in translational accuracy. Located at the back of the 30S subunit body where it stabilizes the conformation of the head with respect to the body. The polypeptide is Small ribosomal subunit protein uS5 (Ruthia magnifica subsp. Calyptogena magnifica).